The chain runs to 52 residues: Conotoxin Cal9.2c (52 aa).

A propeptide spanning residues 1–6 (KKGVTL) is cleaved from the precursor. Disulfide bonds link Cys-14–Cys-31, Cys-19–Cys-41, and Cys-21–Cys-46.

In terms of tissue distribution, expressed by the venom duct.

It is found in the secreted. Functionally, probable neurotoxin with unknown target. Possibly targets ion channels. The sequence is that of Conotoxin Cal9.2c from Californiconus californicus (California cone).